The sequence spans 329 residues: MAFGAPRGRGGDRGGFGGRGGSRGGFGGARGGRGGSRGGFGGDRGGRGGSRGGFGGDRGGRGGRGGPRGGARGGRGGARGGARGGAKVVIEPHRHAGVFIARGKEDLLVTRNIAPGESVYGEKRISIEEPSKEEGAAPTKIEYRVWNPFRSKLAAGIMGGIDELGIAPGKKVLYLGAASGTSVSHVADVVGPEGMVYAVEFSHRPGRELIGMAKKRPNVIPIIDDARHPQKYRMLIGMVDAVFADVAQPDQARIIALNSHLFLKDQGTVVISIKANCIDSTVDAETVFAREVQKLREERIKPLEQLTLEPYERDHCIVVGRYVRSGLKK.

Residues 1–85 (MAFGAPRGRG…GGARGGARGG (85 aa)) form a disordered region. The segment covering 13–84 (RGGFGGRGGS…RGGARGGARG (72 aa)) has biased composition (gly residues). S-adenosyl-L-methionine is bound by residues 181-182 (TS), 200-201 (EF), 225-226 (DA), and 245-248 (DVAQ).

The protein belongs to the methyltransferase superfamily. Fibrillarin family. Component of box C/D small nucleolar ribonucleoprotein (snoRNP) particles that contain SNU13, NOP1, SIK1/NOP56 and NOP58, plus a guide RNA. Post-translationally, by homology to other fibrillarins, some or all of the N-terminal domain arginines are modified to asymmetric dimethylarginine (DMA).

Its subcellular location is the nucleus. The protein resides in the nucleolus. It carries out the reaction L-glutaminyl-[histone H2A] + S-adenosyl-L-methionine = N(5)-methyl-L-glutaminyl-[histone H2A] + S-adenosyl-L-homocysteine + H(+). In terms of biological role, S-adenosyl-L-methionine-dependent methyltransferase that has the ability to methylate both RNAs and proteins. Involved in pre-rRNA processing. Utilizes the methyl donor S-adenosyl-L-methionine to catalyze the site-specific 2'-hydroxyl methylation of ribose moieties in pre-ribosomal RNA. Site specificity is provided by a guide RNA that base pairs with the substrate. Methylation occurs at a characteristic distance from the sequence involved in base pairing with the guide RNA. Also acts as a protein methyltransferase by mediating methylation of 'Gln-105' of histone H2A (H2AQ105me), a modification that impairs binding of the FACT complex and is specifically present at 35S ribosomal DNA locus. The chain is rRNA 2'-O-methyltransferase fibrillarin (NOP1) from Debaryomyces hansenii (strain ATCC 36239 / CBS 767 / BCRC 21394 / JCM 1990 / NBRC 0083 / IGC 2968) (Yeast).